A 173-amino-acid polypeptide reads, in one-letter code: Translation initiation factor IF-3 (173 aa).

Belongs to the IF-3 family. Monomer.

The protein resides in the cytoplasm. IF-3 binds to the 30S ribosomal subunit and shifts the equilibrium between 70S ribosomes and their 50S and 30S subunits in favor of the free subunits, thus enhancing the availability of 30S subunits on which protein synthesis initiation begins. The chain is Translation initiation factor IF-3 from Ehrlichia ruminantium (strain Gardel).